A 428-amino-acid polypeptide reads, in one-letter code: Serine--tRNA ligase (428 aa).

235–237 (TAE) serves as a coordination point for L-serine. 266-268 (RSE) serves as a coordination point for ATP. Glu-289 lines the L-serine pocket. 353–356 (EISS) lines the ATP pocket. Ser-389 is an L-serine binding site.

The protein belongs to the class-II aminoacyl-tRNA synthetase family. Type-1 seryl-tRNA synthetase subfamily. Homodimer. The tRNA molecule binds across the dimer.

The protein localises to the cytoplasm. It carries out the reaction tRNA(Ser) + L-serine + ATP = L-seryl-tRNA(Ser) + AMP + diphosphate + H(+). The enzyme catalyses tRNA(Sec) + L-serine + ATP = L-seryl-tRNA(Sec) + AMP + diphosphate + H(+). The protein operates within aminoacyl-tRNA biosynthesis; selenocysteinyl-tRNA(Sec) biosynthesis; L-seryl-tRNA(Sec) from L-serine and tRNA(Sec): step 1/1. Functionally, catalyzes the attachment of serine to tRNA(Ser). Is also able to aminoacylate tRNA(Sec) with serine, to form the misacylated tRNA L-seryl-tRNA(Sec), which will be further converted into selenocysteinyl-tRNA(Sec). The polypeptide is Serine--tRNA ligase (Shewanella sediminis (strain HAW-EB3)).